The primary structure comprises 264 residues: Thiazole synthase (264 aa).

K106 (schiff-base intermediate with DXP) is an active-site residue. 1-deoxy-D-xylulose 5-phosphate is bound by residues G167, 193-194, and 215-216; these read AG and NS.

This sequence belongs to the ThiG family. As to quaternary structure, homotetramer. Forms heterodimers with either ThiH or ThiS.

It localises to the cytoplasm. The enzyme catalyses [ThiS sulfur-carrier protein]-C-terminal-Gly-aminoethanethioate + 2-iminoacetate + 1-deoxy-D-xylulose 5-phosphate = [ThiS sulfur-carrier protein]-C-terminal Gly-Gly + 2-[(2R,5Z)-2-carboxy-4-methylthiazol-5(2H)-ylidene]ethyl phosphate + 2 H2O + H(+). Its pathway is cofactor biosynthesis; thiamine diphosphate biosynthesis. Its function is as follows. Catalyzes the rearrangement of 1-deoxy-D-xylulose 5-phosphate (DXP) to produce the thiazole phosphate moiety of thiamine. Sulfur is provided by the thiocarboxylate moiety of the carrier protein ThiS. In vitro, sulfur can be provided by H(2)S. The chain is Thiazole synthase from Prochlorococcus marinus (strain MIT 9312).